The sequence spans 122 residues: Large ribosomal subunit protein uL14 (122 aa).

The protein belongs to the universal ribosomal protein uL14 family. In terms of assembly, part of the 50S ribosomal subunit. Forms a cluster with proteins L3 and L19. In the 70S ribosome, L14 and L19 interact and together make contacts with the 16S rRNA in bridges B5 and B8.

Its function is as follows. Binds to 23S rRNA. Forms part of two intersubunit bridges in the 70S ribosome. In Allorhizobium ampelinum (strain ATCC BAA-846 / DSM 112012 / S4) (Agrobacterium vitis (strain S4)), this protein is Large ribosomal subunit protein uL14.